Here is a 178-residue protein sequence, read N- to C-terminus: Adenine phosphoribosyltransferase (178 aa).

It belongs to the purine/pyrimidine phosphoribosyltransferase family. Homodimer.

It is found in the cytoplasm. It catalyses the reaction AMP + diphosphate = 5-phospho-alpha-D-ribose 1-diphosphate + adenine. The protein operates within purine metabolism; AMP biosynthesis via salvage pathway; AMP from adenine: step 1/1. Functionally, catalyzes a salvage reaction resulting in the formation of AMP, that is energically less costly than de novo synthesis. This Novosphingobium aromaticivorans (strain ATCC 700278 / DSM 12444 / CCUG 56034 / CIP 105152 / NBRC 16084 / F199) protein is Adenine phosphoribosyltransferase.